Consider the following 259-residue polypeptide: MDTLNIAGKHYNSRLLVGTGKYKDFEQTRAAIDASGAEIITVAIRRTNIGQNAGEPSLLDYLPPEEFTYLPNTAGCYSAEDAVRTLRLARELLDGHKLVKLEVLGDPNTLYPNMLETIKAAETLIKDGFDVMVYCSDDPIIAKQLEDMGCAAVMPLASLIGSGMGILNPWNLQIIIENAKIPVLVDAGVGTASDAAIAMELGCQGVLMNTAIAAAKDPVLMAGAMKKAVEAGREAFLAGRMPRKLYSASPSSPTSGLIG.

Residue lysine 100 is the Schiff-base intermediate with DXP of the active site. Residues glycine 161, 187–188, and 209–210 each bind 1-deoxy-D-xylulose 5-phosphate; these read AG and NT.

The protein belongs to the ThiG family. In terms of assembly, homotetramer. Forms heterodimers with either ThiH or ThiS.

It is found in the cytoplasm. The enzyme catalyses [ThiS sulfur-carrier protein]-C-terminal-Gly-aminoethanethioate + 2-iminoacetate + 1-deoxy-D-xylulose 5-phosphate = [ThiS sulfur-carrier protein]-C-terminal Gly-Gly + 2-[(2R,5Z)-2-carboxy-4-methylthiazol-5(2H)-ylidene]ethyl phosphate + 2 H2O + H(+). It functions in the pathway cofactor biosynthesis; thiamine diphosphate biosynthesis. In terms of biological role, catalyzes the rearrangement of 1-deoxy-D-xylulose 5-phosphate (DXP) to produce the thiazole phosphate moiety of thiamine. Sulfur is provided by the thiocarboxylate moiety of the carrier protein ThiS. In vitro, sulfur can be provided by H(2)S. This Methylobacillus flagellatus (strain ATCC 51484 / DSM 6875 / VKM B-1610 / KT) protein is Thiazole synthase.